We begin with the raw amino-acid sequence, 150 residues long: Ribonuclease K6 (150 aa).

The first 23 residues, 1–23 (MVLCFPLLLLLLVLWGPVCLLHA), serve as a signal peptide directing secretion. The active-site Proton acceptor is the His-38. 4 disulfides stabilise this stretch: Cys-46–Cys-104, Cys-60–Cys-114, Cys-78–Cys-129, and Cys-85–Cys-92. Residue Asn-55 is glycosylated (N-linked (GlcNAc...) asparagine). Residues 61–65 (KHQNT) and Lys-86 each bind substrate. Residue Asn-100 is glycosylated (N-linked (GlcNAc...) asparagine). Arg-105 is a substrate binding site. The active-site Proton donor is His-145.

It belongs to the pancreatic ribonuclease family. As to quaternary structure, interacts (via N-terminus) with bacterial lipopolysaccharide (LPS).

Its subcellular location is the secreted. The protein resides in the lysosome. It localises to the cytoplasmic granule. Ribonuclease which shows a preference for the pyrimidines uridine and cytosine. Has potent antibacterial activity against a range of Gram-positive and Gram-negative bacteria, including P.aeruginosa, A.baumanii, M.luteus, S.aureus, E.faecalis, E.faecium, S.saprophyticus and E.coli. Causes loss of bacterial membrane integrity, and also promotes agglutination of Gram-negative bacteria. Probably contributes to urinary tract sterility. Bactericidal activity is independent of RNase activity. This chain is Ribonuclease K6 (RNASE6), found in Papio hamadryas (Hamadryas baboon).